Reading from the N-terminus, the 810-residue chain is MEHKEVVLLLLLFLKSGQGEPLDDYVNTKGASLFSITKKQLGAGSIEECAAKCEEEEEFTCRSFQYHSKEQQCVIMAENRKSSIVFRMRDVVLFEKKVYLSECKTGNGKNYRGTMSKTRTGITCQKWSSTSPHRPTFSPATHPSEGLEENYCRNPDNDGQGPWCYTTDPEERFDYCDIPECEDECMHCSGENYDGKISKTMSGLECQAWDSQSPHAHGYIPSKFPNKNLKKNYCRNPDGEPRPWCFTTDPNKRWELCDIPRCTTPPPSSGPTYQCLKGTGENYRGDVAVTVSGHTCHGWSAQTPHTHNRTPENFPCKNLDENYCRNPDGEKAPWCYTTNSQVRWEYCKIPSCESSPVSTEPLDPTAPPELTPVVQECYHGDGQSYRGTSSTTTTGKKCQSWSSMTPHWHEKTPENFPNAGLTMNYCRNPDADKGPWCFTTDPSVRWEYCNLKKCSGTEGSVAAPPPVAQLPDAETPSEEDCMFGNGKGYRGKKATTVTGTPCQEWAAQEPHSHRIFTPETNPRAGLEKNYCRNPDGDVGGPWCYTTNPRKLFDYCDVPQCAASSFDCGKPQVEPKKCPGRVVGGCVAYPHSWPWQISLRTRLGMHFCGGTLISPEWVLTAAHCLEKSSRPSFYKVILGAHREVHLEPHVQEIEVSKMFSEPARADIALLKLSSPAIITDKVIPACLPSPNYVVADRTECFITGWGETQGTYGAGLLKEARLPVIENKVCNRYEFLNGTVKTTELCAGHLAGGTDSCQGDSGGPLVCFEKDKYILQGVTSWGLGCARPNKPGVYVRVSRFVTWIEGVMRNN.

The first 19 residues, 1-19 (MEHKEVVLLLLLFLKSGQG), serve as a signal peptide directing secretion. The region spanning 20-98 (EPLDDYVNTK…RDVVLFEKKV (79 aa)) is the PAN domain. 12 cysteine pairs are disulfide-bonded: C49–C73, C53–C61, C103–C181, C124–C164, C152–C176, C185–C262, C188–C316, C206–C245, C234–C257, C275–C352, C296–C335, and C324–C347. Kringle domains lie at 103–181 (CKTG…IPEC), 184–262 (ECMH…IPRC), and 275–352 (CLKG…IPSC). Positions 125–141 (QKWSSTSPHRPTFSPAT) are enriched in polar residues. The segment at 125 to 145 (QKWSSTSPHRPTFSPATHPSE) is disordered. 3 residues coordinate L-lysine: T136, D158, and R172. O-linked (GalNAc...) threonine glycosylation is present at T365. Cystine bridges form between C377–C454, C398–C437, C426–C449, C481–C560, C502–C543, C531–C555, C567–C685, C577–C585, and C607–C623. 2 Kringle domains span residues 377–454 (CYHG…LKKC) and 481–560 (CMFG…VPQC). D432 and R445 together coordinate L-lysine. A Peptidase S1 domain is found at 581–808 (VVGGCVAYPH…FVTWIEGVMR (228 aa)). A Phosphoserine modification is found at S597. Active-site charge relay system residues include H622 and D665. S688 carries the post-translational modification Phosphoserine. 3 disulfides stabilise this stretch: C699–C766, C729–C745, and C756–C784. S760 functions as the Charge relay system in the catalytic mechanism.

It belongs to the peptidase S1 family. Plasminogen subfamily. As to quaternary structure, interacts with CSPG4 and AMOT. Interacts (via the Kringle domains) with HRG; the interaction tethers PLG to the cell surface and enhances its activation. Interacts (via Kringle 4 domain) with ADA; the interaction stimulates PLG activation when in complex with DPP4. Angiostatin: Interacts with ATP5F1A; the interaction inhibits most of the angiogenic effects of angiostatin. In terms of processing, in the presence of the inhibitor, the activation involves only cleavage after Arg-580, yielding two chains held together by two disulfide bonds. In the absence of the inhibitor, the activation involves additionally the removal of the activation peptide.

It is found in the secreted. It carries out the reaction Preferential cleavage: Lys-|-Xaa &gt; Arg-|-Xaa, higher selectivity than trypsin. Converts fibrin into soluble products.. Its activity is regulated as follows. Converted into plasmin by plasminogen activators, both plasminogen and its activator being bound to fibrin. Activated with catalytic amounts of streptokinase. Its function is as follows. Plasmin dissolves the fibrin of blood clots and acts as a proteolytic factor in a variety of other processes including embryonic development, tissue remodeling, tumor invasion, and inflammation. In ovulation, weakens the walls of the Graafian follicle. It activates the urokinase-type plasminogen activator, collagenases and several complement zymogens, such as C1, C4 and C5. Cleavage of fibronectin and laminin leads to cell detachment and apoptosis. Also cleaves fibrin, thrombospondin and von Willebrand factor. Its role in tissue remodeling and tumor invasion may be modulated by CSPG4. Binds to cells. The sequence is that of Plasminogen (PLG) from Macaca mulatta (Rhesus macaque).